Reading from the N-terminus, the 426-residue chain is Serine--tRNA ligase (426 aa).

233-235 lines the L-serine pocket; the sequence is TAE. ATP is bound at residue 264–266; that stretch reads RSE. Glutamate 287 contributes to the L-serine binding site. 351–354 is a binding site for ATP; the sequence is EISS. Serine 387 provides a ligand contact to L-serine.

It belongs to the class-II aminoacyl-tRNA synthetase family. Type-1 seryl-tRNA synthetase subfamily. In terms of assembly, homodimer. The tRNA molecule binds across the dimer.

It is found in the cytoplasm. The catalysed reaction is tRNA(Ser) + L-serine + ATP = L-seryl-tRNA(Ser) + AMP + diphosphate + H(+). It catalyses the reaction tRNA(Sec) + L-serine + ATP = L-seryl-tRNA(Sec) + AMP + diphosphate + H(+). Its pathway is aminoacyl-tRNA biosynthesis; selenocysteinyl-tRNA(Sec) biosynthesis; L-seryl-tRNA(Sec) from L-serine and tRNA(Sec): step 1/1. In terms of biological role, catalyzes the attachment of serine to tRNA(Ser). Is also able to aminoacylate tRNA(Sec) with serine, to form the misacylated tRNA L-seryl-tRNA(Sec), which will be further converted into selenocysteinyl-tRNA(Sec). This is Serine--tRNA ligase from Pseudomonas fluorescens (strain Pf0-1).